The primary structure comprises 271 residues: Cell division protein FtsQ (271 aa).

The disordered stretch occupies residues methionine 1–phenylalanine 37. At methionine 1–arginine 43 the chain is on the cytoplasmic side. Low complexity predominate over residues alanine 8 to serine 24. A helical transmembrane segment spans residues alanine 44–glycine 64. Topologically, residues serine 65–serine 271 are extracellular. In terms of domain architecture, POTRA spans phenylalanine 68 to arginine 137.

This sequence belongs to the FtsQ/DivIB family. FtsQ subfamily.

The protein localises to the cell membrane. Its function is as follows. Essential cell division protein. The sequence is that of Cell division protein FtsQ from Streptomyces venezuelae (strain ATCC 10712 / CBS 650.69 / DSM 40230 / JCM 4526 / NBRC 13096 / PD 04745).